Consider the following 205-residue polypeptide: MKLIREFYSRDTIVVAKELLGKVLVHEVNGIRTSGKIVEVEAYRGINDKGAHAYGGRRTPRTEALYGPAGHAYVYFIYGLYYCMNVVAMQEGIPEGVLIRAIEPIEGIEVMSERRFKKLFNDLTKYQLKNLTNGPSKLCSAMEIRREQNLMDLNGDELYIEEGKNESFEIVEAKRVGIDYAEEAKDYLWRFYIKGNKCVSVLKKD.

It belongs to the DNA glycosylase MPG family.

The polypeptide is Putative 3-methyladenine DNA glycosylase (Clostridium acetobutylicum (strain ATCC 824 / DSM 792 / JCM 1419 / IAM 19013 / LMG 5710 / NBRC 13948 / NRRL B-527 / VKM B-1787 / 2291 / W)).